The following is a 406-amino-acid chain: Peptidyl-alpha-hydroxyglycine alpha-amidating lyase 2 (406 aa).

Residues M1–S19 form the signal peptide. 4 NHL repeats span residues G168–F209, G218–A261, L264–G308, and D358–K402. Intrachain disulfides connect C231–C251 and C293–C304.

This sequence belongs to the peptidyl-alpha-hydroxyglycine alpha-amidating lyase family. Zn(2+) serves as cofactor. In terms of processing, N-glycosylated. As to expression, only found in a subset of neurons distributed throughout all levels of the central nervous system (CNS). Present in at least some neuroendocrine cells. In adult brains, it is only present in a small handful of cells, the majority of which being distributed in distal parts of the medulla, with a higher expression in the posterior surface of the brain (at protein level).

Its subcellular location is the secreted. The enzyme catalyses a [peptide]-C-terminal (2S)-2-hydroxyglycine = a [peptide]-C-terminal amide + glyoxylate. In terms of biological role, peptidyl-alpha-hydroxylglycine alpha-amidating lyase that catalyzes an essential reaction in C-terminal alpha-amidation of peptides. Mediates the dismutation of the unstable peptidyl(2-hydroxyglycine) intermediate to glyoxylate and the corresponding desglycine peptide amide. C-terminal amidation of peptides such as neuropeptides is essential for full biological activity. In Drosophila melanogaster (Fruit fly), this protein is Peptidyl-alpha-hydroxyglycine alpha-amidating lyase 2 (Pal2).